The primary structure comprises 293 residues: Acetyl-coenzyme A carboxylase carboxyl transferase subunit beta (293 aa).

In terms of domain architecture, CoA carboxyltransferase N-terminal spans 29–293 (LWVKCPECGQ…GCKAKKAAGK (265 aa)). Residues cysteine 33, cysteine 36, cysteine 52, and cysteine 55 each contribute to the Zn(2+) site. The C4-type zinc finger occupies 33 to 55 (CPECGQVVYRKDLHANASVCSNC).

It belongs to the AccD/PCCB family. In terms of assembly, acetyl-CoA carboxylase is a heterohexamer composed of biotin carboxyl carrier protein (AccB), biotin carboxylase (AccC) and two subunits each of ACCase subunit alpha (AccA) and ACCase subunit beta (AccD). The cofactor is Zn(2+).

It localises to the cytoplasm. It catalyses the reaction N(6)-carboxybiotinyl-L-lysyl-[protein] + acetyl-CoA = N(6)-biotinyl-L-lysyl-[protein] + malonyl-CoA. The protein operates within lipid metabolism; malonyl-CoA biosynthesis; malonyl-CoA from acetyl-CoA: step 1/1. Its function is as follows. Component of the acetyl coenzyme A carboxylase (ACC) complex. Biotin carboxylase (BC) catalyzes the carboxylation of biotin on its carrier protein (BCCP) and then the CO(2) group is transferred by the transcarboxylase to acetyl-CoA to form malonyl-CoA. The chain is Acetyl-coenzyme A carboxylase carboxyl transferase subunit beta from Prochlorococcus marinus (strain MIT 9303).